Here is a 25-residue protein sequence, read N- to C-terminus: Alpha-amylase inhibitor (25 aa).

Monomer or homodimer. May exist both in a glycosylated and in an unglycosylated form.

The protein localises to the secreted. In terms of biological role, inhibits alpha-amylases but not trypsin. Is more effective against insect alpha-amylases than those of mammals. In Secale cereale (Rye), this protein is Alpha-amylase inhibitor.